The following is a 658-amino-acid chain: Translation factor GUF1, mitochondrial (658 aa).

One can recognise a tr-type G domain in the interval 45-231 (ENYRNFSIVA…AVIDRIPPPT (187 aa)). GTP contacts are provided by residues 54-61 (AHIDHGKS), 123-127 (DTPGH), and 177-180 (NKID).

This sequence belongs to the TRAFAC class translation factor GTPase superfamily. Classic translation factor GTPase family. LepA subfamily.

It localises to the mitochondrion inner membrane. It catalyses the reaction GTP + H2O = GDP + phosphate + H(+). Promotes mitochondrial protein synthesis. May act as a fidelity factor of the translation reaction, by catalyzing a one-codon backward translocation of tRNAs on improperly translocated ribosomes. Binds to mitochondrial ribosomes in a GTP-dependent manner. The polypeptide is Translation factor GUF1, mitochondrial (Vanderwaltozyma polyspora (strain ATCC 22028 / DSM 70294 / BCRC 21397 / CBS 2163 / NBRC 10782 / NRRL Y-8283 / UCD 57-17) (Kluyveromyces polysporus)).